Reading from the N-terminus, the 326-residue chain is Deoxyuridine 5'-triphosphate nucleotidohydrolase (326 aa).

Substrate-binding positions include 218–220 (RSS) and 321–322 (FG).

Belongs to the dUTPase family. Requires Mg(2+) as cofactor.

The enzyme catalyses dUTP + H2O = dUMP + diphosphate + H(+). Functionally, involved in nucleotide metabolism: produces dUMP, the immediate precursor of thymidine nucleotides and decreases the intracellular concentration of dUTP to avoid uracil incorporation into viral DNA. This chain is Deoxyuridine 5'-triphosphate nucleotidohydrolase, found in Equus caballus (Horse).